The chain runs to 451 residues: C4-dicarboxylate transport protein (451 aa).

A run of 9 helical transmembrane segments spans residues 17–37 (SLYVQVLFAVVVGVLLGHFYP), 53–73 (LIKMIIAPIIFCTVVVGIAGM), 85–105 (LALLYFEIVSSVALVIGLIVV), 153–173 (AFAKGEILQVLLIAVMFGFAL), 193–213 (VLFTIVGYIMKVAPIGAFGAM), 231–251 (LMGSFYLTCLLFVFVVLGLIA), 306–326 (GYSFNLDGTSIYLTMAAVFIA), 339–359 (ITLLLVLLLTSKGAAGITGSG), and 361–381 (IVLAATLSAVGHVPVAGLALI).

This sequence belongs to the dicarboxylate/amino acid:cation symporter (DAACS) (TC 2.A.23) family.

The protein resides in the cell inner membrane. Functionally, responsible for the transport of dicarboxylates such as succinate, fumarate, and malate from the periplasm across the membrane. In Paracidovorax citrulli (strain AAC00-1) (Acidovorax citrulli), this protein is C4-dicarboxylate transport protein.